A 251-amino-acid polypeptide reads, in one-letter code: Putative fatty acid elongase DDB_G0274669 (251 aa).

5 consecutive transmembrane segments (helical) span residues 51–71 (FQIIPIVLVIYLVTIFSIKFL), 82–102 (FISILHNAILCIWSLIMCVGV), 135–155 (WSYIFYISKFYELLDTVIIVL), 177–197 (YITMIQILQFVCLGIAGVLHV), and 211–231 (AFAAAYSINFSFLFLFSKFFV).

It belongs to the ELO family.

The protein localises to the membrane. The catalysed reaction is a very-long-chain acyl-CoA + malonyl-CoA + H(+) = a very-long-chain 3-oxoacyl-CoA + CO2 + CoA. Its function is as follows. Could be implicated in synthesis of very long chain fatty acids. In Dictyostelium discoideum (Social amoeba), this protein is Putative fatty acid elongase DDB_G0274669.